The following is a 255-amino-acid chain: Arginine-binding extracellular protein ArtP (255 aa).

Residues 1–19 (MKKWLLLLVAACITFALTA) form the signal peptide. Cys20 carries N-palmitoyl cysteine lipidation. Cys20 carries the S-diacylglycerol cysteine lipid modification.

It belongs to the bacterial solute-binding protein 3 family.

Its subcellular location is the cell membrane. In terms of biological role, part of a binding-protein-dependent transport system for arginine. The protein is Arginine-binding extracellular protein ArtP (artP) of Bacillus subtilis (strain 168).